The chain runs to 59 residues: Large ribosomal subunit protein uL30 (59 aa).

Belongs to the universal ribosomal protein uL30 family. Part of the 50S ribosomal subunit.

The polypeptide is Large ribosomal subunit protein uL30 (Clostridium botulinum (strain Alaska E43 / Type E3)).